Here is a 467-residue protein sequence, read N- to C-terminus: 3-isopropylmalate dehydratase large subunit (467 aa).

Residues cysteine 348, cysteine 409, and cysteine 412 each coordinate [4Fe-4S] cluster. The tract at residues 423–449 (NERSISTSNRNFEGRQGKGSRTHLASP) is disordered.

Belongs to the aconitase/IPM isomerase family. LeuC type 1 subfamily. In terms of assembly, heterodimer of LeuC and LeuD. Requires [4Fe-4S] cluster as cofactor.

It carries out the reaction (2R,3S)-3-isopropylmalate = (2S)-2-isopropylmalate. It participates in amino-acid biosynthesis; L-leucine biosynthesis; L-leucine from 3-methyl-2-oxobutanoate: step 2/4. In terms of biological role, catalyzes the isomerization between 2-isopropylmalate and 3-isopropylmalate, via the formation of 2-isopropylmaleate. The sequence is that of 3-isopropylmalate dehydratase large subunit from Bifidobacterium longum subsp. infantis (strain ATCC 15697 / DSM 20088 / JCM 1222 / NCTC 11817 / S12).